The primary structure comprises 647 residues: DNA mismatch repair protein MutL (647 aa).

Disordered regions lie at residues 356-391 (EGSQ…SSIS) and 407-428 (PRPQ…EALP). Positions 413-423 (LRPQYQGSVTS) are enriched in polar residues.

It belongs to the DNA mismatch repair MutL/HexB family.

In terms of biological role, this protein is involved in the repair of mismatches in DNA. It is required for dam-dependent methyl-directed DNA mismatch repair. May act as a 'molecular matchmaker', a protein that promotes the formation of a stable complex between two or more DNA-binding proteins in an ATP-dependent manner without itself being part of a final effector complex. This Citrifermentans bemidjiense (strain ATCC BAA-1014 / DSM 16622 / JCM 12645 / Bem) (Geobacter bemidjiensis) protein is DNA mismatch repair protein MutL.